The sequence spans 263 residues: Phosphatidylglycerol--prolipoprotein diacylglyceryl transferase (263 aa).

A run of 3 helical transmembrane segments spans residues 17–37 (LSVRWYGLMYLVAFVQFIFLG), 56–76 (LLFYGMLGVILGGRLGQVLFY), and 88–108 (IFAVWKGGMSFHGGFLGVLVA). R139 contacts a 1,2-diacyl-sn-glycero-3-phospho-(1'-sn-glycerol). 2 helical membrane-spanning segments follow: residues 176-196 (QLYHVGLEGLALFVILWWFTA) and 236-256 (ISMGQWLSLPMILIGVAMVVF).

The protein belongs to the Lgt family.

It is found in the cell inner membrane. The enzyme catalyses L-cysteinyl-[prolipoprotein] + a 1,2-diacyl-sn-glycero-3-phospho-(1'-sn-glycerol) = an S-1,2-diacyl-sn-glyceryl-L-cysteinyl-[prolipoprotein] + sn-glycerol 1-phosphate + H(+). Its pathway is protein modification; lipoprotein biosynthesis (diacylglyceryl transfer). In terms of biological role, catalyzes the transfer of the diacylglyceryl group from phosphatidylglycerol to the sulfhydryl group of the N-terminal cysteine of a prolipoprotein, the first step in the formation of mature lipoproteins. This chain is Phosphatidylglycerol--prolipoprotein diacylglyceryl transferase, found in Dechloromonas aromatica (strain RCB).